Reading from the N-terminus, the 142-residue chain is Hemoglobin subunit alpha (142 aa).

The Globin domain occupies 2–142 (VLSSADKNNV…VSTVLTSKYR (141 aa)). Position 4 is a phosphoserine (Ser4). N6-succinyllysine is present on residues Lys8 and Lys12. Lys17 carries the post-translational modification N6-acetyllysine; alternate. Lys17 carries the N6-succinyllysine; alternate modification. The residue at position 25 (Tyr25) is a Phosphotyrosine. Phosphoserine is present on Ser36. Lys41 is subject to N6-succinyllysine. Ser50 is subject to Phosphoserine. An O2-binding site is contributed by His59. His88 is a heme b binding site. Ser103 bears the Phosphoserine mark. Thr109 bears the Phosphothreonine mark. Ser125 is modified (phosphoserine). A phosphothreonine mark is found at Thr135 and Thr138. Ser139 bears the Phosphoserine mark.

Belongs to the globin family. As to quaternary structure, heterotetramer of two alpha chains and two beta chains. As to expression, red blood cells.

Functionally, involved in oxygen transport from the lung to the various peripheral tissues. In terms of biological role, hemopressin acts as an antagonist peptide of the cannabinoid receptor CNR1. Hemopressin-binding efficiently blocks cannabinoid receptor CNR1 and subsequent signaling. The sequence is that of Hemoglobin subunit alpha (HBA) from Panthera onca (Jaguar).